The chain runs to 274 residues: Large ribosomal subunit protein uL2 (274 aa).

The tract at residues 223–274 (VAMNPVDHPHGGGEGRTSGGRHPVSPWGMPTKGFKTRKNKSTDKYIVRRRNK) is disordered.

The protein belongs to the universal ribosomal protein uL2 family. In terms of assembly, part of the 50S ribosomal subunit. Forms a bridge to the 30S subunit in the 70S ribosome.

Its function is as follows. One of the primary rRNA binding proteins. Required for association of the 30S and 50S subunits to form the 70S ribosome, for tRNA binding and peptide bond formation. It has been suggested to have peptidyltransferase activity; this is somewhat controversial. Makes several contacts with the 16S rRNA in the 70S ribosome. The chain is Large ribosomal subunit protein uL2 from Aliivibrio fischeri (strain ATCC 700601 / ES114) (Vibrio fischeri).